The sequence spans 360 residues: MSTLLSEVESIDTLPYVKDTTPTGSDSSSFNKLLAPSIEDVDANPEELRTLRGQGRYFGITDYDSNGAIMEAEPKCNNCSQRGHLKRNCPHVICTYCGFMDDHYSQHCPKAIICTNCNANGHYKSQCPHKWKKVFCTLCNSKRHSRERCPSIWRSYLLKTKDANQGDFDFQTVFCYNCGNAGHFGDDCAERRSSRVPNTDGSAFCGDNLATKFKQHYFNQLKDYKREASQRQHFDNEHEFNLLDYEYNDDAYDLPGSRTYRDKMKWKGKVQSTRNKNSSNNRYESSNNRKKKSPFSAQNYKVTKNKRVQTHPLDFPRSSQNNRTNDYSSQFSYNRDDFPKGPKNKRGRSSSNKSQRNGRY.

Ser37 carries the phosphoserine modification. 4 consecutive CCHC-type zinc fingers follow at residues 74–91 (PKCNNCSQRGHLKRNCPH), 112–129 (IICTNCNANGHYKSQCPH), 134–151 (VFCTLCNSKRHSRERCPS), and 173–190 (VFCYNCGNAGHFGDDCAE). Residues 265-360 (KWKGKVQSTR…SNKSQRNGRY (96 aa)) are disordered. Residues 274–286 (RNKNSSNNRYESS) are compositionally biased toward low complexity. Polar residues predominate over residues 317-333 (RSSQNNRTNDYSSQFSY). A compositionally biased stretch (low complexity) spans 349–360 (SSSNKSQRNGRY).

This sequence belongs to the AIR1 family. In terms of assembly, component of the TRAMP complex (also called TRF4 complex) composed of at least HUL4, MTR4, PAP2/TFR4 and either AIR1 or AIR2. Component of the TRAMP5 complex composed of at least AIR1, MTR4 and TRF5. Interacts with HMT1 and NPL3. The interaction with NPL3 requires the presence of HMT1.

It is found in the cytoplasm. It localises to the nucleus. Its function is as follows. Component of the TRAMP (TRF4) and TRAMP5 complexes which have a poly(A) RNA polymerase activity and are involved in a post-transcriptional quality control mechanism limiting inappropriate expression of genetic information. Polyadenylation is required for the degradative activity of the exosome on several of its nuclear RNA substrates like cryptic transcripts generated by RNA polymerase II and III, or hypomethylated pre-tRNAi-Met. Both complexes polyadenylate RNA processing and degradation intermediates of snRNAs, snoRNAs and mRNAs that accumulate in strains lacking a functional exosome. AIR1 also inhibits the methylation of NPL3 mediated by HMT1 through its interaction with HMT1. This chain is Protein AIR1 (AIR1), found in Saccharomyces cerevisiae (strain ATCC 204508 / S288c) (Baker's yeast).